The sequence spans 355 residues: tRNA (guanine-N(1)-)-methyltransferase (355 aa).

S-adenosyl-L-methionine contacts are provided by residues Gly109 and 129–134; that span reads IGDYVL.

The protein belongs to the RNA methyltransferase TrmD family. Homodimer.

It is found in the cytoplasm. The enzyme catalyses guanosine(37) in tRNA + S-adenosyl-L-methionine = N(1)-methylguanosine(37) in tRNA + S-adenosyl-L-homocysteine + H(+). Functionally, specifically methylates guanosine-37 in various tRNAs. In Chlamydia caviae (strain ATCC VR-813 / DSM 19441 / 03DC25 / GPIC) (Chlamydophila caviae), this protein is tRNA (guanine-N(1)-)-methyltransferase.